Here is a 104-residue protein sequence, read N- to C-terminus: MAIQGIEGVLQQLQATAIQAGQMDRGAAAPGVSFASELKTAIGKISDTQQAARKQAQDFEIGVPGISLNDVLVDLQKSSISLQMGVQVRNKLVSAYQEVMNMAV.

It belongs to the FliE family.

It localises to the bacterial flagellum basal body. The polypeptide is Flagellar hook-basal body complex protein FliE (Serratia proteamaculans (strain 568)).